The sequence spans 210 residues: Thymidylate kinase (210 aa).

10-17 (GLEGAGKS) is an ATP binding site.

It belongs to the thymidylate kinase family.

The catalysed reaction is dTMP + ATP = dTDP + ADP. Phosphorylation of dTMP to form dTDP in both de novo and salvage pathways of dTTP synthesis. This Hamiltonella defensa subsp. Acyrthosiphon pisum (strain 5AT) protein is Thymidylate kinase.